The primary structure comprises 275 residues: Translation initiation factor 2 subunit alpha (275 aa).

An S1 motif domain is found at glycine 12–arginine 83.

Belongs to the eIF-2-alpha family. As to quaternary structure, heterotrimer composed of an alpha, a beta and a gamma chain.

EIF-2 functions in the early steps of protein synthesis by forming a ternary complex with GTP and initiator tRNA. This chain is Translation initiation factor 2 subunit alpha (eif2a), found in Pyrococcus horikoshii (strain ATCC 700860 / DSM 12428 / JCM 9974 / NBRC 100139 / OT-3).